We begin with the raw amino-acid sequence, 267 residues long: Formamidopyrimidine-DNA glycosylase (267 aa).

The Schiff-base intermediate with DNA role is filled by Pro2. Catalysis depends on Glu3, which acts as the Proton donor. The active-site Proton donor; for beta-elimination activity is the Lys53. His82 and Arg100 together coordinate DNA. The FPG-type zinc-finger motif lies at Ala230 to Gly264. Arg254 serves as the catalytic Proton donor; for delta-elimination activity.

Belongs to the FPG family. In terms of assembly, monomer. Zn(2+) serves as cofactor.

It carries out the reaction Hydrolysis of DNA containing ring-opened 7-methylguanine residues, releasing 2,6-diamino-4-hydroxy-5-(N-methyl)formamidopyrimidine.. The enzyme catalyses 2'-deoxyribonucleotide-(2'-deoxyribose 5'-phosphate)-2'-deoxyribonucleotide-DNA = a 3'-end 2'-deoxyribonucleotide-(2,3-dehydro-2,3-deoxyribose 5'-phosphate)-DNA + a 5'-end 5'-phospho-2'-deoxyribonucleoside-DNA + H(+). Functionally, involved in base excision repair of DNA damaged by oxidation or by mutagenic agents. Acts as a DNA glycosylase that recognizes and removes damaged bases. Has a preference for oxidized purines, such as 7,8-dihydro-8-oxoguanine (8-oxoG). Has AP (apurinic/apyrimidinic) lyase activity and introduces nicks in the DNA strand. Cleaves the DNA backbone by beta-delta elimination to generate a single-strand break at the site of the removed base with both 3'- and 5'-phosphates. The polypeptide is Formamidopyrimidine-DNA glycosylase (Thermus thermophilus (strain ATCC BAA-163 / DSM 7039 / HB27)).